The chain runs to 307 residues: 4-hydroxy-tetrahydrodipicolinate synthase (307 aa).

Pyruvate is bound at residue Thr-49. Tyr-138 serves as the catalytic Proton donor/acceptor. Residue Lys-166 is the Schiff-base intermediate with substrate of the active site. Ile-207 contributes to the pyruvate binding site.

Belongs to the DapA family. In terms of assembly, homotetramer; dimer of dimers.

It is found in the cytoplasm. It carries out the reaction L-aspartate 4-semialdehyde + pyruvate = (2S,4S)-4-hydroxy-2,3,4,5-tetrahydrodipicolinate + H2O + H(+). It participates in amino-acid biosynthesis; L-lysine biosynthesis via DAP pathway; (S)-tetrahydrodipicolinate from L-aspartate: step 3/4. Its function is as follows. Catalyzes the condensation of (S)-aspartate-beta-semialdehyde [(S)-ASA] and pyruvate to 4-hydroxy-tetrahydrodipicolinate (HTPA). In Limosilactobacillus reuteri (strain DSM 20016) (Lactobacillus reuteri), this protein is 4-hydroxy-tetrahydrodipicolinate synthase.